Reading from the N-terminus, the 1006-residue chain is Transcription factor tau subunit sfc4 (1006 aa).

A disordered region spans residues 64-91 (GLWSDEESDYEGSDDESNFSKTASRTED). A compositionally biased stretch (acidic residues) spans 66–80 (WSDEESDYEGSDDES). TPR repeat units follow at residues 133-166 (QQML…DNNV), 205-238 (HELW…KPPN), 277-310 (ASIL…FYQY), 396-429 (HLFR…PPDY), 431-464 (WGML…EPAQ), and 466-499 (IGLW…DNSN). A coiled-coil region spans residues 506-554 (LAEINELQDNRDAALEIVTNIFEQRRNINELEREQSQNEDHEKNVGSQL). TPR repeat units lie at residues 841-874 (PVLV…NPDC) and 924-957 (QEAL…SPMS).

In terms of assembly, component of the TFIIIC complex including sfc1, sfc3, sfc4, sfc6 and sfc7. The subunits are organized in two globular domains, tauA and tauB, connected by a proteolysis-sensitive and flexible linker. Interacts with sfc1, sfc3 and sfc6. Phosphorylated.

It is found in the nucleus. Functionally, TFIIIC mediates tRNA and 5S RNA gene activation by binding to intragenic promoter elements. Upstream of the transcription start site, TFIIIC assembles the initiation complex TFIIIB-TFIIIC-tDNA, which is sufficient for RNA polymerase III recruitment and function. Part of the tauA domain of TFIIIC that binds boxA DNA promoter sites of tRNA and similar genes. Sfc4 is the TFIIIB assembling subunit of TFIIIC. The polypeptide is Transcription factor tau subunit sfc4 (Schizosaccharomyces pombe (strain 972 / ATCC 24843) (Fission yeast)).